An 84-amino-acid polypeptide reads, in one-letter code: Cytochrome b559 subunit alpha (84 aa).

The chain crosses the membrane as a helical span at residues 21–35 (VIHSITIPSLFIAGW). His-23 provides a ligand contact to heme.

The protein belongs to the PsbE/PsbF family. As to quaternary structure, heterodimer of an alpha subunit and a beta subunit. PSII is composed of 1 copy each of membrane proteins PsbA, PsbB, PsbC, PsbD, PsbE, PsbF, PsbH, PsbI, PsbJ, PsbK, PsbL, PsbM, PsbT, PsbX, PsbY, PsbZ, Psb30/Ycf12, at least 3 peripheral proteins of the oxygen-evolving complex and a large number of cofactors. It forms dimeric complexes. Requires heme b as cofactor.

Its subcellular location is the plastid membrane. This b-type cytochrome is tightly associated with the reaction center of photosystem II (PSII). PSII is a light-driven water:plastoquinone oxidoreductase that uses light energy to abstract electrons from H(2)O, generating O(2) and a proton gradient subsequently used for ATP formation. It consists of a core antenna complex that captures photons, and an electron transfer chain that converts photonic excitation into a charge separation. This chain is Cytochrome b559 subunit alpha, found in Cuscuta gronovii (Common dodder).